Reading from the N-terminus, the 604-residue chain is Protein TAX4 (604 aa).

Disordered stretches follow at residues 38 to 77 (HPNG…PRSI), 133 to 249 (FSNR…RQQE), 267 to 300 (GTLP…QENL), 338 to 380 (DETF…KGLK), and 394 to 428 (PFPH…NEDK). The segment covering 176–185 (YDNNVRSRSI) has biased composition (polar residues). Low complexity-rich tracts occupy residues 186–203 (SPQV…SISS) and 224–240 (SMSS…KASL). Basic residues-rich tracts occupy residues 276 to 290 (SQRK…HKLL), 366 to 379 (KKKK…KKGL), and 396 to 421 (PHHH…HTSS). An EH domain is found at 469–559 (ANEDDESHLQ…RVWNSVDGYV (91 aa)).

This sequence belongs to the IRS4 family. As to quaternary structure, interacts with INP51.

In terms of biological role, with IRS4, acts as a positive regulator of INP51 activity and phosphatidylinositol 4,5-bisphosphate turnover. Negatively regulates signaling through the cell integrity pathway, including the MAP kinase SLT2. The protein is Protein TAX4 (TAX4) of Saccharomyces cerevisiae (strain YJM789) (Baker's yeast).